The primary structure comprises 200 residues: Pyridoxine/pyridoxamine 5'-phosphate oxidase (200 aa).

FMN contacts are provided by residues 48-53 (RMVLLK), 63-64 (YT), Lys70, and Gln92. Substrate is bound at residue Lys53. Residues Tyr110, Arg114, and Ser118 each contribute to the substrate site. FMN-binding positions include 127-128 (QS) and Trp171. Residue 177–179 (RLH) coordinates substrate. Arg181 is an FMN binding site.

The protein belongs to the pyridoxamine 5'-phosphate oxidase family. Homodimer. FMN serves as cofactor.

The catalysed reaction is pyridoxamine 5'-phosphate + O2 + H2O = pyridoxal 5'-phosphate + H2O2 + NH4(+). It catalyses the reaction pyridoxine 5'-phosphate + O2 = pyridoxal 5'-phosphate + H2O2. The protein operates within cofactor metabolism; pyridoxal 5'-phosphate salvage; pyridoxal 5'-phosphate from pyridoxamine 5'-phosphate: step 1/1. It functions in the pathway cofactor metabolism; pyridoxal 5'-phosphate salvage; pyridoxal 5'-phosphate from pyridoxine 5'-phosphate: step 1/1. In terms of biological role, catalyzes the oxidation of either pyridoxine 5'-phosphate (PNP) or pyridoxamine 5'-phosphate (PMP) into pyridoxal 5'-phosphate (PLP). The protein is Pyridoxine/pyridoxamine 5'-phosphate oxidase of Cereibacter sphaeroides (strain ATCC 17023 / DSM 158 / JCM 6121 / CCUG 31486 / LMG 2827 / NBRC 12203 / NCIMB 8253 / ATH 2.4.1.) (Rhodobacter sphaeroides).